Reading from the N-terminus, the 377-residue chain is Mucin-7 (377 aa).

A signal peptide spans M1–G22. A disordered region spans residues C70–V100. Residues K73–Q89 are compositionally biased toward pro residues. 4 N-linked (GlcNAc...) asparagine glycosylation sites follow: N97, N128, N135, and N146. Residues S150–K355 form a disordered region. 6 repeat units span residues T165 to E187, T188 to E210, T211 to E233, T234 to E256, T257 to E279, and T280 to E302. Pro residues predominate over residues P169–S183. T176 carries O-linked (GalNAc) threonine; by GALNT13 glycosylation. Residues S182 and S183 are each glycosylated (O-linked (GalNAc) serine; by GALNT13). The span at A184–A214 shows a compositional bias: low complexity. O-linked (GalNAc) threonine; by GALNT13 glycans are attached at residues T188 and T189. A compositionally biased stretch (pro residues) spans P215 to S229. Residues A230–A283 show a composition bias toward low complexity. Pro residues predominate over residues P284–P298. The segment covering T309–P329 has biased composition (polar residues). The segment covering T330–T348 has biased composition (low complexity).

As to quaternary structure, monomer. Post-translationally, N- and O-glycosylated. Contains fucose, mannose, galactose, N-acetylglucosamine and N-acetylgalactosamine. As to expression, expressed in salivary gland tissues and only in those that contain mucous acinar cells (e.g. sublingual and submandibular glands) and not in salivary glands containing only serous acinar cells (e.g. parotid gland).

It localises to the secreted. Its function is as follows. May function in a protective capacity by promoting the clearance of bacteria in the oral cavity and aiding in mastication, speech, and swallowing. Binds P.aeruginosa pili. The polypeptide is Mucin-7 (MUC7) (Homo sapiens (Human)).